Here is an 815-residue protein sequence, read N- to C-terminus: (-)-kolavenyl diphosphate synthase TPS10, chloroplastic (815 aa).

The transit peptide at 1–50 directs the protein to the chloroplast; the sequence is MFMSSSSSSHARRPQLSSFSYLHPPLPFPGLSFSSTRDKRVNFDSTRIIS. Lys247 lines the substrate pocket. Mg(2+) is bound by residues Asp379 and Asp381. The DXDD motif signature appears at 379–382; it reads DIDD. Lys465 lines the substrate pocket.

It belongs to the terpene synthase family. Tpsc subfamily. Mg(2+) is required as a cofactor.

It is found in the plastid. Its subcellular location is the chloroplast. It catalyses the reaction (2E,6E,10E)-geranylgeranyl diphosphate = (-)-kolavenyl diphosphate. Its activity is regulated as follows. Inhibited by high concentrations of magnesium. Its function is as follows. Diterpene synthase that catalyzes the formation of (-)-kolavenyl diphosphate from geranylgeranyl diphosphate (GGPP). This chain is (-)-kolavenyl diphosphate synthase TPS10, chloroplastic, found in Tripterygium wilfordii (Thunder God vine).